The sequence spans 868 residues: Translation initiation factor IF-2 (868 aa).

Disordered stretches follow at residues 158–178 (VKEE…DELT) and 200–269 (KKEE…KYRE). The span at 200–209 (KKEEVKPEKV) shows a compositional bias: basic and acidic residues. A compositionally biased stretch (basic residues) spans 249-260 (RGGRSKFKKKKG). A tr-type G domain is found at 368–537 (GRAPVVTIMG…LLQSEVLELK (170 aa)). Residues 377–384 (GHVDHGKT) are G1. Residue 377-384 (GHVDHGKT) participates in GTP binding. The tract at residues 402 to 406 (GITQH) is G2. A G3 region spans residues 423-426 (DTPG). GTP-binding positions include 423 to 427 (DTPGH) and 477 to 480 (NKMD). Positions 477-480 (NKMD) are G4. A G5 region spans residues 513-515 (SAK).

Belongs to the TRAFAC class translation factor GTPase superfamily. Classic translation factor GTPase family. IF-2 subfamily.

It localises to the cytoplasm. Its function is as follows. One of the essential components for the initiation of protein synthesis. Protects formylmethionyl-tRNA from spontaneous hydrolysis and promotes its binding to the 30S ribosomal subunits. Also involved in the hydrolysis of GTP during the formation of the 70S ribosomal complex. This is Translation initiation factor IF-2 from Legionella pneumophila (strain Lens).